Here is a 222-residue protein sequence, read N- to C-terminus: Uridine kinase (222 aa).

Residue 13-20 coordinates ATP; sequence GGSGAGKT.

Belongs to the uridine kinase family.

It is found in the cytoplasm. It catalyses the reaction uridine + ATP = UMP + ADP + H(+). The enzyme catalyses cytidine + ATP = CMP + ADP + H(+). It functions in the pathway pyrimidine metabolism; CTP biosynthesis via salvage pathway; CTP from cytidine: step 1/3. Its pathway is pyrimidine metabolism; UMP biosynthesis via salvage pathway; UMP from uridine: step 1/1. The polypeptide is Uridine kinase (Chlamydia pneumoniae (Chlamydophila pneumoniae)).